A 230-amino-acid chain; its full sequence is 5'-methylthioadenosine/S-adenosylhomocysteine nucleosidase (230 aa).

The Proton acceptor role is filled by Glu12. Residues Gly78, Ile153, and 174–175 (ME) contribute to the substrate site. Residue Asp198 is the Proton donor of the active site.

The protein belongs to the PNP/UDP phosphorylase family. MtnN subfamily.

It catalyses the reaction S-adenosyl-L-homocysteine + H2O = S-(5-deoxy-D-ribos-5-yl)-L-homocysteine + adenine. The catalysed reaction is S-methyl-5'-thioadenosine + H2O = 5-(methylsulfanyl)-D-ribose + adenine. It carries out the reaction 5'-deoxyadenosine + H2O = 5-deoxy-D-ribose + adenine. The protein operates within amino-acid biosynthesis; L-methionine biosynthesis via salvage pathway; S-methyl-5-thio-alpha-D-ribose 1-phosphate from S-methyl-5'-thioadenosine (hydrolase route): step 1/2. Catalyzes the irreversible cleavage of the glycosidic bond in both 5'-methylthioadenosine (MTA) and S-adenosylhomocysteine (SAH/AdoHcy) to adenine and the corresponding thioribose, 5'-methylthioribose and S-ribosylhomocysteine, respectively. Also cleaves 5'-deoxyadenosine, a toxic by-product of radical S-adenosylmethionine (SAM) enzymes, into 5-deoxyribose and adenine. This is 5'-methylthioadenosine/S-adenosylhomocysteine nucleosidase from Shewanella halifaxensis (strain HAW-EB4).